The following is a 25-amino-acid chain: Xenoposin precursor fragment BM1 (25 aa).

In terms of tissue distribution, expressed by the skin glands.

It is found in the secreted. Its function is as follows. Antimicrobial peptide. In Xenopus boumbaensis (Mawa clawed frog), this protein is Xenoposin precursor fragment BM1.